Here is a 101-residue protein sequence, read N- to C-terminus: Small ribosomal subunit protein uS14 (101 aa).

This sequence belongs to the universal ribosomal protein uS14 family. In terms of assembly, part of the 30S ribosomal subunit. Contacts proteins S3 and S10.

Functionally, binds 16S rRNA, required for the assembly of 30S particles and may also be responsible for determining the conformation of the 16S rRNA at the A site. This chain is Small ribosomal subunit protein uS14, found in Shewanella sp. (strain MR-4).